Reading from the N-terminus, the 203-residue chain is Urease accessory protein UreG (203 aa).

12–19 is a GTP binding site; it reads GPVGSGKT.

The protein belongs to the SIMIBI class G3E GTPase family. UreG subfamily. As to quaternary structure, homodimer. UreD, UreF and UreG form a complex that acts as a GTP-hydrolysis-dependent molecular chaperone, activating the urease apoprotein by helping to assemble the nickel containing metallocenter of UreC. The UreE protein probably delivers the nickel.

The protein resides in the cytoplasm. In terms of biological role, facilitates the functional incorporation of the urease nickel metallocenter. This process requires GTP hydrolysis, probably effectuated by UreG. The protein is Urease accessory protein UreG of Nitrosococcus oceani (strain ATCC 19707 / BCRC 17464 / JCM 30415 / NCIMB 11848 / C-107).